The sequence spans 256 residues: Thiazole synthase (256 aa).

Lys-96 (schiff-base intermediate with DXP) is an active-site residue. 1-deoxy-D-xylulose 5-phosphate is bound by residues Gly-157, 183–184 (AG), and 205–206 (NT).

Belongs to the ThiG family. Homotetramer. Forms heterodimers with either ThiH or ThiS.

The protein resides in the cytoplasm. The catalysed reaction is [ThiS sulfur-carrier protein]-C-terminal-Gly-aminoethanethioate + 2-iminoacetate + 1-deoxy-D-xylulose 5-phosphate = [ThiS sulfur-carrier protein]-C-terminal Gly-Gly + 2-[(2R,5Z)-2-carboxy-4-methylthiazol-5(2H)-ylidene]ethyl phosphate + 2 H2O + H(+). It functions in the pathway cofactor biosynthesis; thiamine diphosphate biosynthesis. Catalyzes the rearrangement of 1-deoxy-D-xylulose 5-phosphate (DXP) to produce the thiazole phosphate moiety of thiamine. Sulfur is provided by the thiocarboxylate moiety of the carrier protein ThiS. In vitro, sulfur can be provided by H(2)S. This Bacillus anthracis protein is Thiazole synthase.